The following is a 427-amino-acid chain: Riboflavin transporter rft-1 (427 aa).

Topologically, residues 1 to 2 (MK) are cytoplasmic. Residues 3–23 (TFLFTFCLVAIFGSSSWIGTN) traverse the membrane as a helical segment. The Extracellular portion of the chain corresponds to 24–42 (SVWMELSLLTAKLPEGWNL). Residues 43–63 (PSYLSAIVQIACLGPLIYSII) form a helical membrane-spanning segment. Topologically, residues 64–73 (HKGIKMTIPT) are cytoplasmic. A helical membrane pass occupies residues 74–94 (VPLIFIFMVLACICQLGLCFF). At 95–111 (WDDTGYIFGAIRSWPLY) the chain is on the extracellular side. Residues 112 to 132 (LLLFGLAIVDAISSVLFLPFM) traverse the membrane as a helical segment. Residues 133-139 (AQFHPSF) lie on the Cytoplasmic side of the membrane. The helical transmembrane segment at 140–160 (LNAYFVGMGLSALIPSLLSLI) threads the bilayer. Residues 161-184 (QGTSNYWCDDNKTPHYYPPRFSVS) are Extracellular-facing. A helical transmembrane segment spans residues 185–205 (MFFLINFFFTCAAVAAFLVLY). Residues 206 to 261 (KIGAHKNSSQVEPEPKHSIQIIQGDSTTDVNEVNTESSFQETSSIPDSSSATGARL) lie on the Cytoplasmic side of the membrane. Residues 262–282 (AFLLLTTALVNAQMNGIVTSV) form a helical membrane-spanning segment. Over 283–297 (QSYATLVYSQNTYHY) the chain is Extracellular. A helical membrane pass occupies residues 298–318 (AVTLSNVISPLASYLQFFVKI). The Cytoplasmic portion of the chain corresponds to 319–322 (RSLP). The chain crosses the membrane as a helical span at residues 323-343 (ILAFLTLCSSLTTAVIIYLAA). The Extracellular portion of the chain corresponds to 344-353 (LSPNWIFNSE). Residues 354-374 (TAGTIISIASSLIAAGLHSYL) form a helical membrane-spanning segment. Over 375 to 391 (RVMFAALLREGNQKESR) the chain is Cytoplasmic. A helical transmembrane segment spans residues 392–412 (LFWCGAFIQIGSFTGSAIMFP). The Extracellular segment spans residues 413–427 (LVNVWKLFHSAPSCR).

This sequence belongs to the riboflavin transporter family. In terms of tissue distribution, expressed in intestine.

The protein resides in the cell membrane. It carries out the reaction riboflavin(in) = riboflavin(out). Its activity is regulated as follows. Activity is strongly inhibited by riboflavin analogs, such as lumiflavin and lumichrome. In terms of biological role, riboflavin transporter. Riboflavin transport is Na(+)-independent but pH-sensitive. This chain is Riboflavin transporter rft-1, found in Caenorhabditis elegans.